The chain runs to 743 residues: UvrABC system protein C (743 aa).

The GIY-YIG domain occupies 16 to 95 (VDPGVYKFRD…IKEFDPRFNV (80 aa)). The region spanning 208–243 (DKLVRQLEARMQQASEELDFETAARLRDDVGALRRA) is the UVR domain. 2 disordered regions span residues 497–543 (AEAA…QTGR) and 694–743 (PSAD…TGVE). The segment covering 506 to 520 (QASDTDGDQVSDTDG) has biased composition (acidic residues). Residues 734 to 743 (QSASQRTGVE) are compositionally biased toward polar residues.

Belongs to the UvrC family. In terms of assembly, interacts with UvrB in an incision complex.

The protein localises to the cytoplasm. Functionally, the UvrABC repair system catalyzes the recognition and processing of DNA lesions. UvrC both incises the 5' and 3' sides of the lesion. The N-terminal half is responsible for the 3' incision and the C-terminal half is responsible for the 5' incision. This is UvrABC system protein C from Rhodococcus opacus (strain B4).